Here is a 540-residue protein sequence, read N- to C-terminus: Chaperonin GroEL (540 aa).

ATP is bound by residues 30 to 33, K51, 87 to 91, G415, 479 to 481, and D495; these read TLGP, DGTTT, and NAA.

The protein belongs to the chaperonin (HSP60) family. Forms a cylinder of 14 subunits composed of two heptameric rings stacked back-to-back. Interacts with the co-chaperonin GroES.

The protein localises to the cytoplasm. The catalysed reaction is ATP + H2O + a folded polypeptide = ADP + phosphate + an unfolded polypeptide.. Functionally, together with its co-chaperonin GroES, plays an essential role in assisting protein folding. The GroEL-GroES system forms a nano-cage that allows encapsulation of the non-native substrate proteins and provides a physical environment optimized to promote and accelerate protein folding. In Raoultella ornithinolytica (Klebsiella ornithinolytica), this protein is Chaperonin GroEL.